A 277-amino-acid polypeptide reads, in one-letter code: Bifunctional protein FolD (277 aa).

Residues 160–162, serine 185, and isoleucine 226 contribute to the NADP(+) site; that span reads GAS.

It belongs to the tetrahydrofolate dehydrogenase/cyclohydrolase family. Homodimer.

It catalyses the reaction (6R)-5,10-methylene-5,6,7,8-tetrahydrofolate + NADP(+) = (6R)-5,10-methenyltetrahydrofolate + NADPH. The enzyme catalyses (6R)-5,10-methenyltetrahydrofolate + H2O = (6R)-10-formyltetrahydrofolate + H(+). Its pathway is one-carbon metabolism; tetrahydrofolate interconversion. In terms of biological role, catalyzes the oxidation of 5,10-methylenetetrahydrofolate to 5,10-methenyltetrahydrofolate and then the hydrolysis of 5,10-methenyltetrahydrofolate to 10-formyltetrahydrofolate. The sequence is that of Bifunctional protein FolD from Ruthia magnifica subsp. Calyptogena magnifica.